A 196-amino-acid polypeptide reads, in one-letter code: Secreted phosphoprotein 24 (196 aa).

A signal peptide spans 1–19 (MKWCGVLMVALLQSLCCSG). 2 cysteine pairs are disulfide-bonded: cysteine 83-cysteine 94 and cysteine 107-cysteine 125. Residues 125–196 (CGQDSSSSES…RGDSFGNHLE (72 aa)) are disordered. Low complexity predominate over residues 129 to 138 (SSSSESSSEE).

Belongs to the SPP2 family. In terms of processing, multiply phosphorylated at serine residues.

It is found in the secreted. Functionally, could coordinate an aspect of bone turnover. In Salmo salar (Atlantic salmon), this protein is Secreted phosphoprotein 24 (spp2).